The chain runs to 741 residues: Oosporein cluster regulator OpS3 (741 aa).

Residues 16–39 (GRPARGQSTTTRSRNTQQSAPTSQ) are disordered. Positions 20 to 34 (RGQSTTTRSRNTQQS) are enriched in low complexity. Positions 44–69 (CRRCRQHRIKCSEKPCEPCRANNSKC) form a DNA-binding region, zn(2)-C6 fungal-type. The interval 139 to 167 (HPNTPNSCPSQSGDIRQQQIPCSQHASPA) is disordered. Residues 473-500 (TAGQSMARLSETIRQLETALDELPEQLL) adopt a coiled-coil conformation. The segment at 501 to 528 (TRHGSRTPTNNGQTHRSRPTCSTMPHTN) is disordered. Polar residues predominate over residues 506–528 (RTPTNNGQTHRSRPTCSTMPHTN).

The protein localises to the nucleus. Functionally, transcription factor involved in regulation of gene cluster that mediates the biosynthesis of oosporein, a metabolite required for fungal virulence that acts by evading host immunity to facilitate fungal multiplication in insects. Binds oosporein cluster genes at a conserved 5'-CGGA-3' motif with the exception of OpS5. The presence of this motif in the OpS3 promoter would suggest the formation of a positive feedback loop for self-activation. The chain is Oosporein cluster regulator OpS3 from Beauveria bassiana (strain ARSEF 2860) (White muscardine disease fungus).